The sequence spans 226 residues: ATP synthase F(0) complex subunit a (226 aa).

Met-1 carries the N-formylmethionine modification. The next 6 membrane-spanning stretches (helical) occupy residues 9–29 (FITP…FPSL), 68–88 (WTLM…LGLL), 97–117 (QLSM…ITGF), 138–158 (IPML…ALAV), 164–184 (ITAG…LMSI), and 189–209 (ALIT…VAMI).

This sequence belongs to the ATPase A chain family. As to quaternary structure, component of the ATP synthase complex composed at least of ATP5F1A/subunit alpha, ATP5F1B/subunit beta, ATP5MC1/subunit c (homooctomer), MT-ATP6/subunit a, MT-ATP8/subunit 8, ATP5ME/subunit e, ATP5MF/subunit f, ATP5MG/subunit g, ATP5MK/subunit k, ATP5MJ/subunit j, ATP5F1C/subunit gamma, ATP5F1D/subunit delta, ATP5F1E/subunit epsilon, ATP5PF/subunit F6, ATP5PB/subunit b, ATP5PD/subunit d, ATP5PO/subunit OSCP. ATP synthase complex consists of a soluble F(1) head domain (subunits alpha(3) and beta(3)) - the catalytic core - and a membrane F(0) domain - the membrane proton channel (subunits c, a, 8, e, f, g, k and j). These two domains are linked by a central stalk (subunits gamma, delta, and epsilon) rotating inside the F1 region and a stationary peripheral stalk (subunits F6, b, d, and OSCP). Interacts with DNAJC30; interaction is direct.

It localises to the mitochondrion inner membrane. The catalysed reaction is H(+)(in) = H(+)(out). Functionally, subunit a, of the mitochondrial membrane ATP synthase complex (F(1)F(0) ATP synthase or Complex V) that produces ATP from ADP in the presence of a proton gradient across the membrane which is generated by electron transport complexes of the respiratory chain. ATP synthase complex consist of a soluble F(1) head domain - the catalytic core - and a membrane F(1) domain - the membrane proton channel. These two domains are linked by a central stalk rotating inside the F(1) region and a stationary peripheral stalk. During catalysis, ATP synthesis in the catalytic domain of F(1) is coupled via a rotary mechanism of the central stalk subunits to proton translocation. With the subunit c (ATP5MC1), forms the proton-conducting channel in the F(0) domain, that contains two crucial half-channels (inlet and outlet) that facilitate proton movement from the mitochondrial intermembrane space (IMS) into the matrix. Protons are taken up via the inlet half-channel and released through the outlet half-channel, following a Grotthuss mechanism. The protein is ATP synthase F(0) complex subunit a of Bos taurus (Bovine).